The sequence spans 207 residues: Outer-membrane lipoprotein LolB (207 aa).

A signal peptide spans methionine 1–alanine 21. Residue cysteine 22 is the site of N-palmitoyl cysteine attachment. A lipid anchor (S-diacylglycerol cysteine) is attached at cysteine 22.

It belongs to the LolB family. As to quaternary structure, monomer.

The protein resides in the cell outer membrane. Plays a critical role in the incorporation of lipoproteins in the outer membrane after they are released by the LolA protein. The chain is Outer-membrane lipoprotein LolB from Serratia proteamaculans (strain 568).